Here is a 468-residue protein sequence, read N- to C-terminus: ATP synthase subunit beta 3 (468 aa).

155 to 162 provides a ligand contact to ATP; that stretch reads GGAGVGKT.

This sequence belongs to the ATPase alpha/beta chains family. F-type ATPases have 2 components, CF(1) - the catalytic core - and CF(0) - the membrane proton channel. CF(1) has five subunits: alpha(3), beta(3), gamma(1), delta(1), epsilon(1). CF(0) has three main subunits: a(1), b(2) and c(9-12). The alpha and beta chains form an alternating ring which encloses part of the gamma chain. CF(1) is attached to CF(0) by a central stalk formed by the gamma and epsilon chains, while a peripheral stalk is formed by the delta and b chains.

The protein localises to the cell inner membrane. The catalysed reaction is ATP + H2O + 4 H(+)(in) = ADP + phosphate + 5 H(+)(out). Produces ATP from ADP in the presence of a proton gradient across the membrane. The catalytic sites are hosted primarily by the beta subunits. The polypeptide is ATP synthase subunit beta 3 (Syntrophotalea carbinolica (strain DSM 2380 / NBRC 103641 / GraBd1) (Pelobacter carbinolicus)).